The following is a 579-amino-acid chain: uncharacterized protein (579 aa).

Helical transmembrane passes span 173-193 (IAMGLAGLAGGALIGLTGGLA), 196-216 (FVAAGLGTLFAGLGLGTMIGA), and 218-238 (YLGTLITSAPMITALFGGFGA).

This sequence belongs to the TMCO4 family.

It is found in the cytoplasm. Its subcellular location is the nucleus membrane. This is an uncharacterized protein from Schizosaccharomyces pombe (strain 972 / ATCC 24843) (Fission yeast).